A 308-amino-acid chain; its full sequence is MKPAFTAGELNTYTSPGDVTAVSRALRHTGRRVMLVPTMGALHDGHLALVRAAKRVPGSVVVVSIFVNPLQFSAGEDLDAYPRTLDDDLALLRSEGVEIAFTPTAAAMYPNGLRTTVQPGPLAAELEGGPRPTHFAGVLTVVCKLLQIVRPDRIFFGEKDYQQLVMIRQMVADLNIDVQVVGVPTVREADGLAMSSRNRYLDATQRELAVTLSAALTAGAHAAHLGGAAALRAARAVLDAVPELTVDYLELRDAGLGPAPAHGSARLLVAARLGNTRLLDNIEMQIETPAGTAGPDGDRQYAQSPWRN.

Residue 39–46 (MGALHDGH) participates in ATP binding. The Proton donor role is filled by His-46. Gln-71 contributes to the (R)-pantoate binding site. Gln-71 contributes to the beta-alanine binding site. 157-160 (GEKD) is a binding site for ATP. Position 163 (Gln-163) interacts with (R)-pantoate. ATP is bound by residues Val-186 and 194–197 (MSSR). A disordered region spans residues 286 to 308 (IETPAGTAGPDGDRQYAQSPWRN).

The protein belongs to the pantothenate synthetase family. As to quaternary structure, homodimer.

It is found in the cytoplasm. The enzyme catalyses (R)-pantoate + beta-alanine + ATP = (R)-pantothenate + AMP + diphosphate + H(+). It participates in cofactor biosynthesis; (R)-pantothenate biosynthesis; (R)-pantothenate from (R)-pantoate and beta-alanine: step 1/1. Catalyzes the condensation of pantoate with beta-alanine in an ATP-dependent reaction via a pantoyl-adenylate intermediate. The polypeptide is Pantothenate synthetase (Mycobacterium avium (strain 104)).